Reading from the N-terminus, the 331-residue chain is Pectate lyase B (331 aa).

The first 25 residues, 1 to 25 (MKFTGSPLLWPSWLPLPAPPPPLPS), serve as a signal peptide directing secretion. Residue N99 is glycosylated (N-linked (GlcNAc...) asparagine). The Ca(2+) site is built by D139, D169, and D173. R226 is a catalytic residue.

The protein belongs to the polysaccharide lyase 1 family. The cofactor is Ca(2+).

It localises to the secreted. The catalysed reaction is Eliminative cleavage of (1-&gt;4)-alpha-D-galacturonan to give oligosaccharides with 4-deoxy-alpha-D-galact-4-enuronosyl groups at their non-reducing ends.. It functions in the pathway glycan metabolism; pectin degradation; 2-dehydro-3-deoxy-D-gluconate from pectin: step 2/5. Functionally, acts as a virulence factor active in plant tissue maceration. The sequence is that of Pectate lyase B (PLB) from Colletotrichum gloeosporioides (Anthracnose fungus).